Consider the following 164-residue polypeptide: MKRKYSLVAVGGTFDRFHKGHRRLLDEAFRVGETVMIGVTSDEFAAAKGEGIEPCSVRMKNLEEYLRDKDADYHVMRLDDPYGTTVTDEAFEAIVVSRETEPVAREINAIRRNRGFRELDIITIDMVNADDGIPISSTRIRRGEIDPMGHIIKRIRGALRRRRE.

Belongs to the eukaryotic CoaD family.

It is found in the cytoplasm. It catalyses the reaction (R)-4'-phosphopantetheine + ATP + H(+) = 3'-dephospho-CoA + diphosphate. It participates in cofactor biosynthesis; coenzyme A biosynthesis. In terms of biological role, reversibly transfers an adenylyl group from ATP to 4'-phosphopantetheine, yielding dephospho-CoA (dPCoA) and pyrophosphate. This is Phosphopantetheine adenylyltransferase from Methanothermobacter thermautotrophicus (strain ATCC 29096 / DSM 1053 / JCM 10044 / NBRC 100330 / Delta H) (Methanobacterium thermoautotrophicum).